A 43-amino-acid polypeptide reads, in one-letter code: Defensin (43 aa).

3 disulfides stabilise this stretch: Cys-3–Cys-34, Cys-20–Cys-39, and Cys-24–Cys-41.

Belongs to the invertebrate defensin family. Type 1 subfamily.

It is found in the secreted. Functionally, antibacterial peptide. Affects Gram-positive bacteria M.luteus, B.megaterium, A.viridans, S.aureus and S.saprophyticus. Moderate activity against P.acidilactici and B.subtilis QB935. Also affects Gram-negative bacterium, D22 form of E.coli. The chain is Defensin from Pyrrhocoris apterus (Sap sucking bug).